Consider the following 453-residue polypeptide: F-box protein SKIP14 (453 aa).

One can recognise an F-box; degenerate domain in the interval 34-104 (RKNTGGDASS…NRQQLFAGLS (71 aa)).

As to quaternary structure, part of a SCF (ASK-cullin-F-box) protein ligase complex. Interacts with CUL1, SKP1A/ASK1 and SPK1B/ASK2.

It functions in the pathway protein modification; protein ubiquitination. Functionally, component of SCF(ASK-cullin-F-box) E3 ubiquitin ligase complexes, which may mediate the ubiquitination and subsequent proteasomal degradation of target proteins. This chain is F-box protein SKIP14 (SKIP14), found in Arabidopsis thaliana (Mouse-ear cress).